The chain runs to 514 residues: Arabinose import ATP-binding protein AraG (514 aa).

2 ABC transporter domains span residues 16–251 (LRFN…MVGR) and 251–507 (RDIQ…LPRH). 48–55 (GENGAGKS) contacts ATP.

Belongs to the ABC transporter superfamily. Arabinose importer (TC 3.A.1.2.2) family. As to quaternary structure, the complex is composed of two ATP-binding proteins (AraG), two transmembrane proteins (AraH) and a solute-binding protein (AraF).

It is found in the cell inner membrane. The catalysed reaction is L-arabinose(out) + ATP + H2O = L-arabinose(in) + ADP + phosphate + H(+). Functionally, part of the ABC transporter complex AraFGH involved in arabinose import. Responsible for energy coupling to the transport system. This chain is Arabinose import ATP-binding protein AraG, found in Pseudomonas fluorescens (strain Pf0-1).